Here is a 75-residue protein sequence, read N- to C-terminus: Large ribosomal subunit protein uL30 (75 aa).

Belongs to the universal ribosomal protein uL30 family. In terms of assembly, part of the 50S ribosomal subunit.

The sequence is that of Large ribosomal subunit protein uL30 from Roseiflexus castenholzii (strain DSM 13941 / HLO8).